We begin with the raw amino-acid sequence, 556 residues long: Arginine--tRNA ligase (556 aa).

The 'HIGH' region motif lies at 132 to 142 (ANPTGNLHLGH).

This sequence belongs to the class-I aminoacyl-tRNA synthetase family. In terms of assembly, monomer.

The protein resides in the cytoplasm. It carries out the reaction tRNA(Arg) + L-arginine + ATP = L-arginyl-tRNA(Arg) + AMP + diphosphate. This chain is Arginine--tRNA ligase, found in Bacillus licheniformis (strain ATCC 14580 / DSM 13 / JCM 2505 / CCUG 7422 / NBRC 12200 / NCIMB 9375 / NCTC 10341 / NRRL NRS-1264 / Gibson 46).